The chain runs to 543 residues: Periplasmic oligopeptide-binding protein OppA (543 aa).

The N-terminal stretch at 1-26 (MTNITKRSLVAAGVLAALMAGNVALA) is a signal peptide. C297 and C443 are oxidised to a cystine.

The protein belongs to the bacterial solute-binding protein 5 family. The complex is composed of two ATP-binding proteins (OppD and OppF), two transmembrane proteins (OppB and OppC) and a solute-binding protein (OppA).

The protein localises to the periplasm. Functionally, part of the ABC transporter complex OppABCDF involved in the uptake of oligopeptides. Plays an important nutritional role. Binds peptides containing from two to five amino acid residues. Displays a preference for tripeptides and tetrapeptides over dipeptides and pentapeptides, for peptides composed of L-amino acids and for positively charged peptides. Cannot bind the cell wall peptide L-Ala-D-Gly-gamma-meso-diaminopimelic acid. In Escherichia coli (strain K12), this protein is Periplasmic oligopeptide-binding protein OppA.